The following is a 390-amino-acid chain: Flap endonuclease 1-2 (390 aa).

The N-domain stretch occupies residues 1–108 (MGIHQLMQFL…GELARRKKLK (108 aa)). Aspartate 34 lines the Mg(2+) pocket. Arginine 74 is a DNA binding site. Mg(2+) is bound by residues aspartate 90, glutamate 162, glutamate 164, aspartate 183, and aspartate 185. The I-domain stretch occupies residues 126-254 (QALLQNQRTT…GTAYKLIKEY (129 aa)). Glutamate 162 is a binding site for DNA. Residues glycine 232 and aspartate 234 each coordinate DNA. Aspartate 234 contacts Mg(2+). An interaction with PCNA region spans residues 348 to 356 (FQSRLENFF). The disordered stretch occupies residues 359–390 (TTKIIHPNNSKAKAKSNKKTEQPQKSGGKKKI).

Belongs to the XPG/RAD2 endonuclease family. FEN1 subfamily. Interacts with PCNA. Three molecules of FEN1 bind to one PCNA trimer with each molecule binding to one PCNA monomer. PCNA stimulates the nuclease activity without altering cleavage specificity. Mg(2+) is required as a cofactor. Post-translationally, phosphorylated. Phosphorylation upon DNA damage induces relocalization to the nuclear plasma.

The protein resides in the nucleus. It is found in the nucleolus. It localises to the nucleoplasm. Its subcellular location is the mitochondrion. Functionally, structure-specific nuclease with 5'-flap endonuclease and 5'-3' exonuclease activities involved in DNA replication and repair. During DNA replication, cleaves the 5'-overhanging flap structure that is generated by displacement synthesis when DNA polymerase encounters the 5'-end of a downstream Okazaki fragment. It enters the flap from the 5'-end and then tracks to cleave the flap base, leaving a nick for ligation. Also involved in the long patch base excision repair (LP-BER) pathway, by cleaving within the apurinic/apyrimidinic (AP) site-terminated flap. Acts as a genome stabilization factor that prevents flaps from equilibrating into structures that lead to duplications and deletions. Also possesses 5'-3' exonuclease activity on nicked or gapped double-stranded DNA, and exhibits RNase H activity. Also involved in replication and repair of rDNA and in repairing mitochondrial DNA. This Paramecium tetraurelia protein is Flap endonuclease 1-2.